Here is a 44-residue protein sequence, read N- to C-terminus: Antibacterial protein 3 homolog (44 aa).

This sequence belongs to the staphylococcal hemolytic protein family.

It localises to the secreted. Functionally, has hemolytic activity and also inhibits the growth of gonococci. This Staphylococcus haemolyticus (strain JCSC1435) protein is Antibacterial protein 3 homolog.